Here is an 871-residue protein sequence, read N- to C-terminus: Protein argonaute-2 (871 aa).

The PAZ domain occupies 232–351; that stretch reads PVIEFMCEVL…LPLEVCNIVA (120 aa). 2 interaction with guide RNA regions span residues 314 to 319 and 536 to 578; these read YFKDRH and GKTP…LCLK. Positions 529–830 constitute a Piwi domain; that stretch reads LVVVILPGKT…VAFRARYHLV (302 aa). The interaction with GW182 family members stretch occupies residues 599–602; that stretch reads FQQP. An a divalent metal cation-binding site is contributed by D609. The segment at 662–672 is interaction with GW182 family members; it reads LIQFYKSTRFK. Residue D681 participates in a divalent metal cation binding. Interaction with guide RNA regions lie at residues 721 to 722, 765 to 773, and 802 to 824; these read KR, HAGIQGTSR, and YVRC…VAFR. H819 serves as a coordination point for a divalent metal cation. The disordered stretch occupies residues 834 to 856; it reads HDSAEGSHTSGQSNGRDQQALAK. Over residues 839–850 the composition is skewed to polar residues; that stretch reads GSHTSGQSNGRD.

It belongs to the argonaute family. Ago subfamily. In terms of assembly, component of the RISC loading complex (RLC), or micro-RNA (miRNA) loading complex (miRLC), which is composed of dicer1, ago2 and tarbp2. Note that the trimeric RLC/miRLC is also referred to as RISC. Requires Mg(2+) as cofactor. Mn(2+) serves as cofactor.

The protein localises to the cytoplasm. It is found in the P-body. It catalyses the reaction Endonucleolytic cleavage to 5'-phosphomonoester.. Its function is as follows. Required for RNA-mediated gene silencing (RNAi) by the RNA-induced silencing complex (RISC). The 'minimal RISC' appears to include ago2 bound to a short guide RNA such as a microRNA (miRNA) or short interfering RNA (siRNA). These guide RNAs direct RISC to complementary mRNAs that are targets for RISC-mediated gene silencing. The precise mechanism of gene silencing depends on the degree of complementarity between the miRNA or siRNA and its target. Binding of RISC to a perfectly complementary mRNA generally results in silencing due to endonucleolytic cleavage of the mRNA specifically by ago2. Binding of RISC to a partially complementary mRNA results in silencing through inhibition of translation, and this is independent of endonuclease activity. The inhibition of translational initiation leads to the accumulation of the affected mRNA in cytoplasmic processing bodies (P-bodies), where mRNA degradation may subsequently occur. The protein is Protein argonaute-2 (ago2) of Xenopus tropicalis (Western clawed frog).